The primary structure comprises 202 residues: N-(5'-phosphoribosyl)anthranilate isomerase (202 aa).

The protein belongs to the TrpF family.

It catalyses the reaction N-(5-phospho-beta-D-ribosyl)anthranilate = 1-(2-carboxyphenylamino)-1-deoxy-D-ribulose 5-phosphate. It participates in amino-acid biosynthesis; L-tryptophan biosynthesis; L-tryptophan from chorismate: step 3/5. The protein is N-(5'-phosphoribosyl)anthranilate isomerase of Listeria monocytogenes serovar 1/2a (strain ATCC BAA-679 / EGD-e).